Consider the following 207-residue polypeptide: Arginine exporter protein ArgO (207 aa).

6 helical membrane passes run 1-21, 42-62, 67-87, 111-131, 150-170, and 185-205; these read MLSTFVQGFFLSAAMILPLGP, LCAISDGFLIGVGVFGGSALL, LLLQFVTWGGVAFLFWYGWGA, VVAIIFAVTWLNPHVYLDTIV, FGAASASVSWFFSLSLLAAWF, and GFICIIMWYIAWQLAKQGLLI.

It belongs to the LysE/ArgO transporter (TC 2.A.75) family.

It is found in the cell inner membrane. It catalyses the reaction L-arginine(in) = L-arginine(out). Functionally, involved in the export of arginine. Important to control the intracellular level of arginine and the correct balance between arginine and lysine. The chain is Arginine exporter protein ArgO from Photorhabdus laumondii subsp. laumondii (strain DSM 15139 / CIP 105565 / TT01) (Photorhabdus luminescens subsp. laumondii).